A 168-amino-acid chain; its full sequence is MSEKEKKDLSQECEELKEKYRELEEYAKRLKAEYENYREEVAREKRELIKNANEYLISRLIPILDDFERALNQKDHEESFYEGVKLIYKKLLNTLEKEGLSKIQVGETFDPFEYEAVERVETDDVEEYTVLEVLESGYKFHGKVLKPAKVKVAVRPRKKDEESPDKKE.

Belongs to the GrpE family. As to quaternary structure, homodimer.

The protein localises to the cytoplasm. In terms of biological role, participates actively in the response to hyperosmotic and heat shock by preventing the aggregation of stress-denatured proteins, in association with DnaK and GrpE. It is the nucleotide exchange factor for DnaK and may function as a thermosensor. Unfolded proteins bind initially to DnaJ; upon interaction with the DnaJ-bound protein, DnaK hydrolyzes its bound ATP, resulting in the formation of a stable complex. GrpE releases ADP from DnaK; ATP binding to DnaK triggers the release of the substrate protein, thus completing the reaction cycle. Several rounds of ATP-dependent interactions between DnaJ, DnaK and GrpE are required for fully efficient folding. The protein is Protein GrpE of Thermotoga neapolitana (strain ATCC 49049 / DSM 4359 / NBRC 107923 / NS-E).